Reading from the N-terminus, the 613-residue chain is Carotenoid dioxygenase (613 aa).

A disordered region spans residues 1 to 25; the sequence is MSPHEVIGTVPKNSTTFRTQADEHD. 4 residues coordinate Fe(2+): histidine 261, histidine 313, histidine 383, and histidine 595.

This sequence belongs to the carotenoid oxygenase family. Fe(2+) is required as a cofactor.

It is found in the cytoplasm. The protein resides in the cytosol. It carries out the reaction torulene + O2 = 4'-apo-beta-carotenal + 3-methyl-2-butenal. The protein operates within carotenoid biosynthesis. Torulene dioxygenase; part of pathway that mediates the biosynthesis of neurosporaxanthin, a carboxylic apocarotenoid acting as an essential protective pigments and leading to orange pigmentation. Cao-2 mediates the cleavage of torulene into beta-apo-4'-carotenal, the aldehyde corresponding to the acidic neurosporaxanthin. Is not able to use gamma-carotene (that it is not desaturated at the C4'-C5' bond) as substrate, which suggests a high specificity of cao-2 in cleaving the C4'-C5' double bond. Neurosporaxanthin is synthesized from geranyl-geranyl pyrophosphate (GGPP) through several enzymatic activities. Phytoene synthase activity performed by the bifunctional enzyme al-2 first produces phytoene from geranyl-geranyl pyrophosphate (GGPP). The phytoene dehydrogenase al-1 then introduces 5 desaturations to lead to 3,4-didehydrolycopene via the intermediates phytofluene, zeta-carotene, neurosporene and lycopene. Al-2 cyclase activity then converts 3,4-didehydrolycopene into torulene. Al-2 can also convet lycopene into gamma-carotene which in turn is converted to beta-carotene by an additional al-2 cyclization reaction. Torulene is the substrate of the dioxidase cao-2 that breaks the molecule, removing five carbon atoms to yield beta-apo-4'-carotenal, whereas the aldehyde dehydrogenase ylo-1 mediates the last step by converting beta-apo-4'-carotenal into neurosporaxanthin. The sequence is that of Carotenoid dioxygenase from Neurospora crassa (strain ATCC 24698 / 74-OR23-1A / CBS 708.71 / DSM 1257 / FGSC 987).